The chain runs to 281 residues: Small ribosomal subunit protein uS2 (281 aa).

Positions 233–281 are disordered; the sequence is NKAEGEAAEQPMAAWEKELLTNEAPAEASAEAAAPAAAEGETAEAPKAE. The segment covering 255–275 has biased composition (low complexity); it reads EAPAEASAEAAAPAAAEGETA.

The protein belongs to the universal ribosomal protein uS2 family.

The chain is Small ribosomal subunit protein uS2 from Bifidobacterium longum (strain DJO10A).